The following is a 91-amino-acid chain: DNA-binding protein HU (91 aa).

The protein belongs to the bacterial histone-like protein family.

Its function is as follows. Histone-like DNA-binding protein which is capable of wrapping DNA to stabilize it, and thus to prevent its denaturation under extreme environmental conditions. Also seems to act as a fortuitous virulence factor in delayed sequelae by binding to heparan sulfate-proteoglycans in the extracellular matrix of target organs and acting as a nidus for in situ immune complex formation. The polypeptide is DNA-binding protein HU (hup) (Streptococcus pyogenes serotype M1).